The chain runs to 186 residues: Intraflagellar transport protein 27 homolog (186 aa).

Residues 12 to 19 (GDPAVGKT), 64 to 68 (DSAGK), and 123 to 126 (NKTD) contribute to the GTP site.

This sequence belongs to the small GTPase superfamily. Rab family. As to quaternary structure, component of the IFT complex B, at least composed of IFT20, IFT25, IFT27, IFT52, IFT57, IFT74, IFT81, IFT88 and TRAF3IP1. Interacts with IFT25. Interacts with IFT70B. Interacts with RABL2/RABL2A; binding is equal in the presence of GTP or GDP. Interacts with ARL6; recognizes and binds with the GTP-free form of ARL6.

It localises to the cell projection. It is found in the cilium. The protein resides in the cytoplasm. Its subcellular location is the flagellum. In terms of biological role, small GTPase-like component of the intraflagellar transport (IFT) complex B that promotes the exit of the BBSome complex from cilia via its interaction with ARL6. Not involved in entry of the BBSome complex into cilium. Prevents aggregation of GTP-free ARL6. Required for hedgehog signaling. Forms a subcomplex within the IFT complex B with IFT25. Its role in intraflagellar transport is mainly seen in tissues rich in ciliated cells such as kidney and testis. Essential for male fertility, spermiogenesis and sperm flagella formation. Plays a role in the early development of the kidney. May be involved in the regulation of ureteric bud initiation. The chain is Intraflagellar transport protein 27 homolog (IFT27) from Homo sapiens (Human).